A 290-amino-acid chain; its full sequence is Syntaxin-2 (290 aa).

Residues 1–266 (MRDRLPDLTA…KYQSKARRKK (266 aa)) are Cytoplasmic-facing. A Phosphoserine modification is found at Ser-14. The stretch at 69-106 (EGKIKEELEDLNKEIKKTANRIRGKLKAIEQSCDQDEN) forms a coiled coil. The 63-residue stretch at 193-255 (LNEIESRHKD…EHAKEETKKA (63 aa)) folds into the t-SNARE coiled-coil homology domain. A helical; Anchor for type IV membrane protein transmembrane segment spans residues 267 to 290 (WIIAAVVVAVIAVLALIIGLTVGK).

This sequence belongs to the syntaxin family. Interacts with SYT6 and SYT8; the interaction is Ca(2+)-dependent. As to expression, heart, spleen, liver, and testis.

It localises to the membrane. In terms of biological role, essential for epithelial morphogenesis. May mediate Ca(2+)-regulation of exocytosis acrosomal reaction in sperm. In Rattus norvegicus (Rat), this protein is Syntaxin-2 (Stx2).